The chain runs to 264 residues: Small ribosomal subunit protein eS1A (264 aa).

The tract at residues Gly233–Val264 is disordered. Basic and acidic residues predominate over residues Ala242 to Gly255.

It belongs to the eukaryotic ribosomal protein eS1 family. Component of the small ribosomal subunit. Mature ribosomes consist of a small (40S) and a large (60S) subunit. The 40S subunit contains about 33 different proteins and 1 molecule of RNA (18S). The 60S subunit contains about 49 different proteins and 3 molecules of RNA (28S, 5.8S and 5S). Part of the small subunit (SSU) processome, composed of more than 70 proteins and the RNA chaperone small nucleolar RNA (snoRNA) U3.

Its subcellular location is the cytoplasm. The protein localises to the nucleus. The protein resides in the nucleolus. In terms of biological role, component of the small ribosomal subunit. The ribosome is a large ribonucleoprotein complex responsible for the synthesis of proteins in the cell. Part of the small subunit (SSU) processome, first precursor of the small eukaryotic ribosomal subunit. During the assembly of the SSU processome in the nucleolus, many ribosome biogenesis factors, an RNA chaperone and ribosomal proteins associate with the nascent pre-rRNA and work in concert to generate RNA folding, modifications, rearrangements and cleavage as well as targeted degradation of pre-ribosomal RNA by the RNA exosome. May play a role during erythropoiesis. The protein is Small ribosomal subunit protein eS1A (rps3a-a) of Xenopus laevis (African clawed frog).